The chain runs to 329 residues: D-threo-aldose 1-dehydrogenase (329 aa).

Tyrosine 58 (proton donor) is an active-site residue. Histidine 145 lines the substrate pocket.

The protein belongs to the aldo/keto reductase family.

It carries out the reaction a D-threo-aldose + NAD(+) = a D-threo-aldono-1,5-lactone + NADH + H(+). Its activity is regulated as follows. Inhibited strongly by Hg(2+), Cd(2+) and para-chloromercuribenzoic acid (PCMB) and weakly by Zn(2+) and iodoacetamide. Also inhibited strongly by L-xylose but not D-glucose. Its function is as follows. Catalyzes the oxidation of L-fucose to L-fuconolactone in the presence of NADP(+). Also active against L-galactose and, to a much lesser degree, D-arabinose. Uses NADP(+) as a hydrogen acceptor much more efficiently than NAD(+). This chain is D-threo-aldose 1-dehydrogenase, found in Pseudomonas sp.